We begin with the raw amino-acid sequence, 338 residues long: Fructose-1,6-bisphosphatase class 1 (338 aa).

Positions 90, 112, 114, and 115 each coordinate Mg(2+). Substrate contacts are provided by residues 115–118, N207, and K273; that span reads DGSS. E279 is a binding site for Mg(2+).

Belongs to the FBPase class 1 family. As to quaternary structure, homotetramer. It depends on Mg(2+) as a cofactor.

It is found in the cytoplasm. It catalyses the reaction beta-D-fructose 1,6-bisphosphate + H2O = beta-D-fructose 6-phosphate + phosphate. Its pathway is carbohydrate biosynthesis; gluconeogenesis. This chain is Fructose-1,6-bisphosphatase class 1, found in Stenotrophomonas maltophilia (strain K279a).